The chain runs to 107 residues: Phosphoribosyl-ATP pyrophosphatase (107 aa).

It belongs to the PRA-PH family.

The protein resides in the cytoplasm. The enzyme catalyses 1-(5-phospho-beta-D-ribosyl)-ATP + H2O = 1-(5-phospho-beta-D-ribosyl)-5'-AMP + diphosphate + H(+). It functions in the pathway amino-acid biosynthesis; L-histidine biosynthesis; L-histidine from 5-phospho-alpha-D-ribose 1-diphosphate: step 2/9. This chain is Phosphoribosyl-ATP pyrophosphatase, found in Methylobacterium nodulans (strain LMG 21967 / CNCM I-2342 / ORS 2060).